Here is a 166-residue protein sequence, read N- to C-terminus: Regulatory protein RecX (166 aa).

It belongs to the RecX family.

It is found in the cytoplasm. In terms of biological role, modulates RecA activity. The protein is Regulatory protein RecX of Salmonella paratyphi C (strain RKS4594).